Consider the following 131-residue polypeptide: Holin-like protein CidA (131 aa).

Transmembrane regions (helical) follow at residues 4–24, 30–50, 65–85, and 88–108; these read VQLIIKLLLQLGIIIVITYIG, IFHLPLAGSIVGLFLFYLLLQ, FLLKTMVFFFIPSVVGIMDVA, and ITLNYILFFAVIIIGTCIVAL.

The protein belongs to the CidA/LrgA family. CidA subfamily.

It is found in the cell membrane. Functionally, increases the activity of extracellular murein hydrolases possibly by mediating their export via hole formation. Inhibited by the antiholin-like proteins LrgAB. In an unstressed cell, the LrgAB products probably inhibit the function of the CidAB proteins. When a cell is stressed by the addition of antibiotics or by other factors in the environment, the CidAB proteins possibly oligomerize within the bacterial cell membrane, creating lesions that disrupt the proton motive force, which in turn results in loss of cell viability. These lesions are also hypothesized to regulate the subsequent cell lysis by either allowing the murein hydrolases access to the cell wall substrate and/or regulating their activity by a possible change in the cell wall pH that results from loss of membrane potential. The protein is Holin-like protein CidA of Staphylococcus aureus (strain Mu3 / ATCC 700698).